The chain runs to 773 residues: Angiomotin-like protein 2 (773 aa).

Disordered regions lie at residues 41 to 157 (GGAG…HVRS), 169 to 238 (RNGA…SPHF), and 259 to 309 (QYQY…LAQM). Basic and acidic residues-rich tracts occupy residues 80–91 (QGGETHLAENRL), 100–112 (KGEELPTYEEAKA), and 141–152 (RRQDEALRELRH). Residues 101–302 (GEELPTYEEA…GPPGAQATSG (202 aa)) are required for interaction with CDH5. Tyr107 is subject to Phosphotyrosine; by FGFR1. Residues 177-190 (HMSSSHSFPQLARS) are compositionally biased toward polar residues. The segment covering 196-213 (PRGPPAEGPEPRGPPPQY) has biased composition (pro residues). A required for interaction with CDH1 region spans residues 220-302 (QETAAVNDPR…GPPGAQATSG (83 aa)). Residues 304–577 (AHLAQMESVL…KYLEERAMRQ (274 aa)) are a coiled coil. Glycyl lysine isopeptide (Lys-Gly) (interchain with G-Cter in ubiquitin) cross-links involve residues Lys342 and Lys403. Disordered regions lie at residues 589–611 (QRDTTLIRHSPQPSPSSSFNEGL) and 677–754 (WQGF…TTSL). Residues 701-710 (EEPPATPPLP) show a composition bias toward pro residues. Residues 719-734 (DGSTQTDGPADSTSAC) show a composition bias toward polar residues. Ser753 and Ser756 each carry phosphoserine. Residues 770-773 (EILI) carry the PDZ-binding motif.

It belongs to the angiomotin family. In terms of assembly, part of a complex composed of AMOTL2, MAGI1 and CDH5, within the complex AMOTL2 acts as a scaffold protein for the interaction of MAGI1 with CDH5. The complex is required for coupling actin fibers to cell junctions in endothelial cells. Within the complex AMOTL2 (via its N-terminus) interacts with CDH5. Interacts (via N-terminus) with MAGI1. Interacts (via N-terminus) with ACTB; the interaction facilitates binding of cell junction complexes to actin fibers in endothelial cells. Interacts with CDH1; the interaction may facilitate binding of radial actin fibers to cell junction complexes. Interacts with SRC. Interacts with YAP1; the interaction is required for ubiquitination of AMOTL2 and localization of YAP1 to tight junctions. Interacts with WWP1; the interaction facilitates WWP1 interaction with the Crumbs complex and subsequent WWP1 translocation to the plasma membrane. WWP1 interaction with the Crumbs complex promotes WWP1 monoubiquitination of AMOTL2 which subsequently activates the Hippo signaling pathway. When ubiquitinated interacts with LATS2 (via UBA domain); the interaction promotes LATS2 phosphorylation of YAP1. Interacts (via PPXY motif) with WWTR1/TAZ (via WW domain); the interaction promotes WWTR1/TAZ localization to the cytoplasm and thereby inhibition of its transcriptional properties. Interacts with PHLDB2; interaction may facilitate PHLDB2 localization to the myotube podosome cortex that surrounds the core. In terms of processing, monoubiquitinated at Lys-342 and Lys-403 by Crumbs complex-bound WWP1. De-ubiquitinated at Lys-342 and Lys-403 by USP9X; the interaction may be promoted by cell contact inhibition. Deubiquitination of AMOTL2 negatively regulates Hippo signaling activation. Post-translationally, phosphorylation at Tyr-107 is necessary for efficient binding to SRC and synergistically functioning with SRC to activate the downstream MAPK pathway.

It localises to the recycling endosome. Its subcellular location is the cytoplasm. It is found in the cell projection. The protein localises to the podosome. The protein resides in the cell junction. Its function is as follows. Regulates the translocation of phosphorylated SRC to peripheral cell-matrix adhesion sites. Required for proper architecture of actin filaments. Plays a role in coupling actin fibers to cell junctions in endothelial cells and is therefore required for correct endothelial cell morphology via facilitating transcellular transmission of mechanical force resulting in endothelial cell elongation. Required for the anchoring of radial actin fibers to CDH1 junction complexes at the cell membrane which facilitates organization of radial actin fiber structure and cellular response to contractile forces. This contributes to maintenance of cell area, size, shape, epithelial sheet organization and trophectoderm cell properties that facilitate blastocyst zona hatching. Inhibits the Wnt/beta-catenin signaling pathway, probably by recruiting CTNNB1 to recycling endosomes and hence preventing its translocation to the nucleus. Participates in angiogenesis. Activates the Hippo signaling pathway in response to cell contact inhibition via interaction with and ubiquitination by Crumbs complex-bound WWP1. Ubiquitinated AMOTL2 then interacts with LATS2 which in turn phosphorylates YAP1, excluding it from the nucleus and localizing it to the cytoplasm and tight junctions, therefore ultimately repressing YAP1-driven transcription of target genes. Acts to inhibit WWTR1/TAZ transcriptional coactivator activity via sequestering WWTR1/TAZ in the cytoplasm and at tight junctions. Regulates the size and protein composition of the podosome cortex and core at myofibril neuromuscular junctions. Selectively promotes FGF-induced MAPK activation through SRC. May play a role in the polarity, proliferation and migration of endothelial cells. This is Angiomotin-like protein 2 from Rattus norvegicus (Rat).